Reading from the N-terminus, the 152-residue chain is Transcriptional repressor NrdR (152 aa).

The segment at 3 to 34 (CCYCGHGESKVLETRSAEEGRVIRRRRECMEC) is a zinc-finger region. The 91-residue stretch at 49–139 (LIVRKKGGSL…VYRQFTDVGR (91 aa)) folds into the ATP-cone domain.

This sequence belongs to the NrdR family. Zn(2+) serves as cofactor.

Its function is as follows. Negatively regulates transcription of bacterial ribonucleotide reductase nrd genes and operons by binding to NrdR-boxes. This Heliobacterium modesticaldum (strain ATCC 51547 / Ice1) protein is Transcriptional repressor NrdR.